A 147-amino-acid chain; its full sequence is Deoxyuridine 5'-triphosphate nucleotidohydrolase (147 aa).

R24 provides a ligand contact to Mg(2+). Residues 68–70 (PRS), 82–85 (GVID), Y88, G93, I95, and R111 contribute to the dUTP site.

The protein belongs to the dUTPase family. It depends on Mg(2+) as a cofactor.

It catalyses the reaction dUTP + H2O = dUMP + diphosphate + H(+). This enzyme is involved in nucleotide metabolism: it produces dUMP, the immediate precursor of thymidine nucleotides and it decreases the intracellular concentration of dUTP so that uracil cannot be incorporated into DNA. The chain is Deoxyuridine 5'-triphosphate nucleotidohydrolase (OPG046) from Bos taurus (Bovine).